Consider the following 136-residue polypeptide: Cytidine deaminase (136 aa).

One can recognise a CMP/dCMP-type deaminase domain in the interval 1–128 (MDVEKLIAES…KLLPGAFSKE (128 aa)). Residue 42–44 (NIE) participates in substrate binding. Position 53 (cysteine 53) interacts with Zn(2+). Glutamate 55 serves as the catalytic Proton donor. 2 residues coordinate Zn(2+): cysteine 86 and cysteine 89.

The protein belongs to the cytidine and deoxycytidylate deaminase family. Requires Zn(2+) as cofactor.

It catalyses the reaction cytidine + H2O + H(+) = uridine + NH4(+). The catalysed reaction is 2'-deoxycytidine + H2O + H(+) = 2'-deoxyuridine + NH4(+). In terms of biological role, this enzyme scavenges exogenous and endogenous cytidine and 2'-deoxycytidine for UMP synthesis. The protein is Cytidine deaminase (cdd) of Sporosarcina psychrophila (Bacillus psychrophilus).